A 453-amino-acid chain; its full sequence is Tubulin alpha chain (453 aa).

Gln11 is a binding site for GTP. An N6-acetyllysine modification is found at Lys40. Glu71, Gly144, Thr145, Thr179, Asn206, and Asn228 together coordinate GTP. Mg(2+) is bound at residue Glu71. The active site involves Glu254.

The protein belongs to the tubulin family. Dimer of alpha and beta chains. A typical microtubule is a hollow water-filled tube with an outer diameter of 25 nm and an inner diameter of 15 nM. Alpha-beta heterodimers associate head-to-tail to form protofilaments running lengthwise along the microtubule wall with the beta-tubulin subunit facing the microtubule plus end conferring a structural polarity. Microtubules usually have 13 protofilaments but different protofilament numbers can be found in some organisms and specialized cells. Mg(2+) is required as a cofactor. Post-translationally, undergoes a tyrosination/detyrosination cycle, the cyclic removal and re-addition of a C-terminal tyrosine residue by the enzymes tubulin tyrosine carboxypeptidase (TTCP) and tubulin tyrosine ligase (TTL), respectively. In terms of processing, acetylation of alpha chains at Lys-40 stabilizes microtubules and affects affinity and processivity of microtubule motors. This modification has a role in multiple cellular functions, ranging from cell motility, cell cycle progression or cell differentiation to intracellular trafficking and signaling.

The protein localises to the cytoplasm. The protein resides in the cytoskeleton. It catalyses the reaction GTP + H2O = GDP + phosphate + H(+). Its function is as follows. Tubulin is the major constituent of microtubules, a cylinder consisting of laterally associated linear protofilaments composed of alpha- and beta-tubulin heterodimers. Microtubules grow by the addition of GTP-tubulin dimers to the microtubule end, where a stabilizing cap forms. Below the cap, tubulin dimers are in GDP-bound state, owing to GTPase activity of alpha-tubulin. In Neospora caninum (Coccidian parasite), this protein is Tubulin alpha chain (TUBA).